The sequence spans 95 residues: Opiscorpine-1 (95 aa).

The first 19 residues, 1–19, serve as a signal peptide directing secretion; that stretch reads MNNKLTALIFLGLLAIASC. One can recognise a BetaSPN-type CS-alpha/beta domain in the interval 55–95; that stretch reads EFMCVANVDMTKSCDTHCQKASGEKGYCHGTKCKCGVPLSY. 3 cysteine pairs are disulfide-bonded: Cys-58-Cys-82, Cys-68-Cys-87, and Cys-72-Cys-89.

This sequence belongs to the long chain scorpion toxin family. Class 3 subfamily. In terms of tissue distribution, expressed by the venom gland.

It is found in the secreted. In terms of biological role, the short synthetic peptide (20-54) has antimicrobial activity against the yeasts F.culmorum (IC(50)=8.8 uM) and F.oxysporum (IC(50)=10 uM), and the Gram-negative bacteria E.coli. This is Opiscorpine-1 from Opistophthalmus carinatus (African yellow leg scorpion).